Reading from the N-terminus, the 200-residue chain is MEETKQSLIASLPSAPRKPKSKVERVVRKTFKGTAHLSNLLPTGSVMSFQIMCPVLTHQGQCPTITSRWLTCFLVSLCAISCFLFSFTDSIRDPNGKVRYGLATWSGLLVMDGSITLTEEEKEKYKLKILDFIHAIMSMLVFFAVSMFDQNVTRCLFPVPSEETKEILTSLPFVIGVICGAFFLAFPTRRHGIGSPLTKE.

4 helical membrane passes run 37-57, 69-89, 129-149, and 167-187; these read LSNL…PVLT, WLTC…SFTD, ILDF…SMFD, and ILTS…LAFP.

Belongs to the plant DMP1 protein family. In terms of tissue distribution, expressed in leaves, stems, flowers, siliques and roots, especially in the vasculature.

The protein resides in the endoplasmic reticulum membrane. Its function is as follows. Involved in membrane remodeling. The protein is Protein DMP7 of Arabidopsis thaliana (Mouse-ear cress).